The sequence spans 215 residues: L-fuculose phosphate aldolase (215 aa).

Substrate-binding positions include 28–29 (GN), 43–44 (TG), and 71–72 (SS). The Proton donor/acceptor role is filled by glutamate 73. Residues glutamate 73, histidine 92, histidine 94, and histidine 155 each coordinate Zn(2+).

It belongs to the aldolase class II family. AraD/FucA subfamily. Homotetramer. Zn(2+) is required as a cofactor.

It carries out the reaction L-fuculose 1-phosphate = (S)-lactaldehyde + dihydroxyacetone phosphate. It participates in carbohydrate degradation; L-fucose degradation; L-lactaldehyde and glycerone phosphate from L-fucose: step 3/3. In terms of biological role, involved in the degradation of L-fucose and D-arabinose. Catalyzes the reversible cleavage of L-fuculose 1-phosphate (Fuc1P) to yield dihydroxyacetone phosphate (DHAP) and L-lactaldehyde. In Escherichia coli O157:H7, this protein is L-fuculose phosphate aldolase.